The primary structure comprises 312 residues: Olfactory receptor 13J1 (312 aa).

Residues 1 to 25 lie on the Extracellular side of the membrane; it reads MEPLNRTEVSEFFLKGFSGYPALEH. N-linked (GlcNAc...) asparagine glycosylation occurs at Asn-5. Residues 26 to 46 traverse the membrane as a helical segment; sequence LLFPLCSAMYLVTLLGNTAIM. The Cytoplasmic segment spans residues 47–54; sequence AVSVLDIH. The chain crosses the membrane as a helical span at residues 55–75; the sequence is LHTPVYFFLGNLSTLDICYTP. Residues 76–99 lie on the Extracellular side of the membrane; the sequence is TFVPLMLVHLLSSRKTISFAVCAI. A disulfide bridge connects residues Cys-97 and Cys-189. A helical transmembrane segment spans residues 100–120; the sequence is QMCLSLSTGSTECLLLAITAY. Residues 121 to 139 are Cytoplasmic-facing; it reads DRYLAICQPLRYHVLMSHR. A helical transmembrane segment spans residues 140 to 160; the sequence is LCVLLMGAAWVLCLLKSVTEM. The Extracellular portion of the chain corresponds to 161-197; it reads VISMRLPFCGHHVVSHFTCKILAVLKLACGNTSVSED. An N-linked (GlcNAc...) asparagine glycan is attached at Asn-191. A helical transmembrane segment spans residues 198 to 217; the sequence is FLLAGSILLLPVPLAFICLS. Topologically, residues 218–237 are cytoplasmic; the sequence is YLLILATILRVPSAARCCKA. A helical transmembrane segment spans residues 238–258; sequence FSTCLAHLAVVLLFYGTIIFM. Residues 259 to 271 lie on the Extracellular side of the membrane; it reads YLKPKSKEAHISD. The chain crosses the membrane as a helical span at residues 272–292; sequence EVFTVLYAMVTTMLNPTIYSL. Residues 293–312 are Cytoplasmic-facing; sequence RNKEVKEAARKVWGRSRASR.

This sequence belongs to the G-protein coupled receptor 1 family.

Its subcellular location is the cell membrane. Its function is as follows. Odorant receptor. The chain is Olfactory receptor 13J1 (OR13J1) from Homo sapiens (Human).